Here is a 375-residue protein sequence, read N- to C-terminus: Probable L-tyrosine/L-aspartate decarboxylase (375 aa).

An N6-(pyridoxal phosphate)lysine modification is found at lysine 226.

The protein belongs to the group II decarboxylase family. MfnA subfamily. The cofactor is pyridoxal 5'-phosphate.

It carries out the reaction L-tyrosine + H(+) = tyramine + CO2. The catalysed reaction is L-aspartate + H(+) = beta-alanine + CO2. Its pathway is cofactor biosynthesis; methanofuran biosynthesis. It participates in cofactor biosynthesis; coenzyme A biosynthesis. Its function is as follows. Catalyzes the decarboxylation of L-tyrosine to produce tyramine for methanofuran biosynthesis. Can also catalyze the decarboxylation of L-aspartate to produce beta-alanine for coenzyme A (CoA) biosynthesis. In Methanocella arvoryzae (strain DSM 22066 / NBRC 105507 / MRE50), this protein is Probable L-tyrosine/L-aspartate decarboxylase.